The chain runs to 956 residues: Outer capsid protein VP2 (956 aa).

Belongs to the orbivirus VP2 family.

It is found in the virion. The VP2 protein is one of the two proteins (with VP5) which constitute the virus particle outer capsid. It is the major target of the host immunogenic response. Responsible for viral attachment to target host cell, probably by binding to sialic acid. This attachment induces virion internalization predominantly through clathrin-dependent endocytosis. In Bluetongue virus 11 (isolate USA) (BTV 11), this protein is Outer capsid protein VP2 (Segment-2).